The chain runs to 69 residues: Cytochrome c oxidase subunit 8A, mitochondrial (69 aa).

The transit peptide at 1–25 (MYVVTPLLLRGLTGSARRLPVPRAQ) directs the protein to the mitochondrion. The SIFI-degron signature appears at 2 to 19 (YVVTPLLLRGLTGSARRL). Residues 26-36 (VHSMPPEQKLG) lie on the Mitochondrial matrix side of the membrane. The helical transmembrane segment at 37–60 (VLELAIGFTSCMVTFLLPAGWIMS) threads the bilayer. Residues 61–69 (HLESYKKRG) lie on the Mitochondrial intermembrane side of the membrane.

This sequence belongs to the cytochrome c oxidase VIII family. Component of the cytochrome c oxidase (complex IV, CIV), a multisubunit enzyme composed of 14 subunits. The complex is composed of a catalytic core of 3 subunits MT-CO1, MT-CO2 and MT-CO3, encoded in the mitochondrial DNA, and 11 supernumerary subunits COX4I, COX5A, COX5B, COX6A, COX6B, COX6C, COX7A, COX7B, COX7C, COX8 and NDUFA4, which are encoded in the nuclear genome. The complex exists as a monomer or a dimer and forms supercomplexes (SCs) in the inner mitochondrial membrane with NADH-ubiquinone oxidoreductase (complex I, CI) and ubiquinol-cytochrome c oxidoreductase (cytochrome b-c1 complex, complex III, CIII), resulting in different assemblies (supercomplex SCI(1)III(2)IV(1) and megacomplex MCI(2)III(2)IV(2)). In terms of processing, in response to mitochondrial stress, the precursor protein is ubiquitinated by the SIFI complex in the cytoplasm before mitochondrial import, leading to its degradation. Within the SIFI complex, UBR4 initiates ubiquitin chain that are further elongated or branched by KCMF1.

The protein localises to the mitochondrion inner membrane. Its pathway is energy metabolism; oxidative phosphorylation. In terms of biological role, component of the cytochrome c oxidase, the last enzyme in the mitochondrial electron transport chain which drives oxidative phosphorylation. The respiratory chain contains 3 multisubunit complexes succinate dehydrogenase (complex II, CII), ubiquinol-cytochrome c oxidoreductase (cytochrome b-c1 complex, complex III, CIII) and cytochrome c oxidase (complex IV, CIV), that cooperate to transfer electrons derived from NADH and succinate to molecular oxygen, creating an electrochemical gradient over the inner membrane that drives transmembrane transport and the ATP synthase. Cytochrome c oxidase is the component of the respiratory chain that catalyzes the reduction of oxygen to water. Electrons originating from reduced cytochrome c in the intermembrane space (IMS) are transferred via the dinuclear copper A center (CU(A)) of subunit 2 and heme A of subunit 1 to the active site in subunit 1, a binuclear center (BNC) formed by heme A3 and copper B (CU(B)). The BNC reduces molecular oxygen to 2 water molecules using 4 electrons from cytochrome c in the IMS and 4 protons from the mitochondrial matrix. The sequence is that of Cytochrome c oxidase subunit 8A, mitochondrial (COX8A) from Ateles belzebuth (White-bellied spider monkey).